The following is a 67-amino-acid chain: Guanine nucleotide-binding protein G(I)/G(S)/G(O) subunit gamma-13 (67 aa).

Cys-64 is modified (cysteine methyl ester). Residue Cys-64 is the site of S-farnesyl cysteine attachment. Residues 65-67 constitute a propeptide, removed in mature form; that stretch reads TIL.

This sequence belongs to the G protein gamma family. As to quaternary structure, g proteins are composed of 3 units, alpha, beta and gamma.

The protein localises to the cell membrane. Functionally, guanine nucleotide-binding proteins (G proteins) are involved as a modulator or transducer in various transmembrane signaling systems. The beta and gamma chains are required for the GTPase activity, for replacement of GDP by GTP, and for G protein-effector interaction. This is Guanine nucleotide-binding protein G(I)/G(S)/G(O) subunit gamma-13 (GNG13) from Homo sapiens (Human).